We begin with the raw amino-acid sequence, 322 residues long: Sideroflexin-1 (322 aa).

S2 is subject to N-acetylserine. The Mitochondrial matrix segment spans residues S2–T102. The helical transmembrane segment at I103–W120 threads the bilayer. Residues Q121 to E146 are Mitochondrial intermembrane-facing. Residues L147–A167 form a helical membrane-spanning segment. Residues L168–P174 lie on the Mitochondrial matrix side of the membrane. A helical transmembrane segment spans residues L175–L195. At M196–Q228 the chain is on the mitochondrial intermembrane side. Residues V229 to N249 form a helical membrane-spanning segment. Topologically, residues T250–P266 are mitochondrial matrix. The chain crosses the membrane as a helical span at residues I267–F287. Over P288–L322 the chain is Mitochondrial intermembrane.

Belongs to the sideroflexin family. Highly expressed in tissues with high one-carbon metabolism activity, such as blood, liver and kidney.

It localises to the mitochondrion inner membrane. The enzyme catalyses L-serine(in) = L-serine(out). It carries out the reaction L-alanine(in) = L-alanine(out). The catalysed reaction is L-cysteine(in) = L-cysteine(out). Its function is as follows. Amino acid transporter importing serine, an essential substrate of the mitochondrial branch of the one-carbon pathway, into mitochondria. Mitochondrial serine is then converted to glycine and formate, which exits to the cytosol where it is used to generate the charged folates that serve as one-carbon donors. May also transport other amino acids including alanine and cysteine. The sequence is that of Sideroflexin-1 from Homo sapiens (Human).